Here is a 129-residue protein sequence, read N- to C-terminus: MYEDAIDFDDPYLFHSVISPQLNSGLITPRYVLDKVIDKYNKSNTDLLYEVEGYIRQLVWREYSRMLYRYIRKDMMKNYFGNKNRISEIWYTGNTGIEPVDLAISSAFQYGLSTSNFFFIFLYIFTIKI.

Residues 103 to 125 (AISSAFQYGLSTSNFFFIFLYIF) traverse the membrane as a helical segment.

It localises to the membrane. This is an uncharacterized protein from Acanthamoeba polyphaga (Amoeba).